Consider the following 25-residue polypeptide: Caerin-2.4 (25 aa).

Expressed by the skin parotoid and/or rostral glands.

The protein resides in the secreted. Antibacterial peptide, that adopts an alpha helical conformation which can disrupt bacterial membranes. Each caerin displays a different antimicrobial specificity. The chain is Caerin-2.4 from Ranoidea caerulea (Green tree frog).